Reading from the N-terminus, the 292-residue chain is Glycine--tRNA ligase alpha subunit (292 aa).

This sequence belongs to the class-II aminoacyl-tRNA synthetase family. Tetramer of two alpha and two beta subunits.

It is found in the cytoplasm. The catalysed reaction is tRNA(Gly) + glycine + ATP = glycyl-tRNA(Gly) + AMP + diphosphate. This is Glycine--tRNA ligase alpha subunit from Synechococcus elongatus (strain ATCC 33912 / PCC 7942 / FACHB-805) (Anacystis nidulans R2).